Consider the following 112-residue polypeptide: HTH-type transcriptional regulator YodB (112 aa).

The HTH hxlR-type domain maps to C6–D105.

Its function is as follows. Negatively regulates yodC and azoR1 which may contribute to the degradation of aromatic compounds. Probably positively regulates the catechol-specific transcription of mhqNOP, mhqED, and mhqA. This is HTH-type transcriptional regulator YodB (yodB) from Bacillus subtilis (strain 168).